Reading from the N-terminus, the 71-residue chain is Pro-MCH (71 aa).

An N-terminal signal peptide occupies residues 1 to 20 (AKMSLSSYILILTLVLFSQG).

This sequence belongs to the melanin-concentrating hormone family.

It localises to the secreted. The chain is Pro-MCH (PMCH) from Carlito syrichta (Philippine tarsier).